The following is a 377-amino-acid chain: uncharacterized protein (377 aa).

The tract at residues 1–46 is disordered; the sequence is MLAGLRRRGSMTTPPGPEIPPPHQGGFYSAGHHPQRPWPETPPPKT. Pro residues-rich tracts occupy residues 14 to 23 and 36 to 45; these read PPGPEIPPPH and RPWPETPPPK. A helical transmembrane segment spans residues 53–73; that stretch reads MLGAVALLAVVGVTVAVTLAV. Positions 77–107 are disordered; that stretch reads DKRDAIPPGSGVSGSPTASDIASADDSGPVS.

It is found in the cell inner membrane. May be involved in the ESX-1 / type VII specialized secretion system (T7SS), which exports several proteins including EsxA and EsxB. Involved in DNA conjugation in the recipient strain. This is an uncharacterized protein from Mycolicibacterium smegmatis (strain MKD8) (Mycobacterium smegmatis).